The chain runs to 540 residues: NADH-quinone oxidoreductase subunit N 1 (540 aa).

Transmembrane regions (helical) follow at residues 11 to 31, 52 to 72, 109 to 129, 142 to 162, 195 to 215, 250 to 270, 284 to 306, 324 to 344, 352 to 372, 386 to 406, 431 to 451, 464 to 486, and 508 to 528; these read ILPE…DVLT, AVGL…LFTV, FTMI…LLAM, ALLI…EFIL, FLFG…TYGF, LILG…VVPF, PVTA…RLLT, WTSI…LAAL, LLAY…LLWA, LIYY…VLAV, LMMT…GFWA, AVPL…LRFL, and AAII…NLIW.

It belongs to the complex I subunit 2 family. NDH-1 is composed of 14 different subunits. Subunits NuoA, H, J, K, L, M, N constitute the membrane sector of the complex.

The protein localises to the cell membrane. The enzyme catalyses a quinone + NADH + 5 H(+)(in) = a quinol + NAD(+) + 4 H(+)(out). Its function is as follows. NDH-1 shuttles electrons from NADH, via FMN and iron-sulfur (Fe-S) centers, to quinones in the respiratory chain. The immediate electron acceptor for the enzyme in this species is believed to be ubiquinone. Couples the redox reaction to proton translocation (for every two electrons transferred, four hydrogen ions are translocated across the cytoplasmic membrane), and thus conserves the redox energy in a proton gradient. The sequence is that of NADH-quinone oxidoreductase subunit N 1 from Roseiflexus castenholzii (strain DSM 13941 / HLO8).